The following is a 152-amino-acid chain: Ribosome maturation factor RimP (152 aa).

The protein belongs to the RimP family.

It localises to the cytoplasm. Its function is as follows. Required for maturation of 30S ribosomal subunits. The protein is Ribosome maturation factor RimP of Paraburkholderia xenovorans (strain LB400).